The sequence spans 1249 residues: Protein STU1 (1249 aa).

Low complexity-rich tracts occupy residues 138–156 (LNSSGSLKAGSLSSSTATK) and 555–574 (AASPMPSYASSSSTGAPSSA). Disordered stretches follow at residues 138–161 (LNSSGSLKAGSLSSSTATKSKPHE), 545–619 (KQLE…NPVF), 644–718 (HVET…LGLG), 755–846 (AEHE…NGNI), 860–891 (AFQTPLNPKTSALRSSSAIRTPAWKDSPRPEA), and 1084–1118 (HPAPPSSSADNSDPMTSALSQLSLSSSKESPEKRT). The span at 581–600 (KKMDLKAMLAERRRAVKEAG) shows a compositional bias: basic and acidic residues. Composition is skewed to low complexity over residues 647–667 (TSSPSPVRSPTPSSSATRIRP) and 708–718 (SPSLSPSLGLG). The segment covering 755 to 774 (AEHEVDELTLKEGQKTRDDG) has biased composition (basic and acidic residues). Polar residues-rich tracts occupy residues 809-822 (QQGNTFSTSTSGRV), 831-844 (ATGTTASLPNSRNG), and 863-878 (TPLNPKTSALRSSSAI). Residues 1089–1111 (SSSADNSDPMTSALSQLSLSSSK) are compositionally biased toward low complexity.

The protein belongs to the CLASP family. Interacts with microtubules.

It is found in the cytoplasm. It localises to the cytoskeleton. The protein localises to the nucleus. The protein resides in the spindle. Its function is as follows. Microtubule binding protein that promotes the stabilization of dynamic microtubules. Required for mitotic spindle formation. This is Protein STU1 (STU1) from Cryptococcus neoformans var. neoformans serotype D (strain JEC21 / ATCC MYA-565) (Filobasidiella neoformans).